Consider the following 434-residue polypeptide: Alpha-enolase (434 aa).

S2 is subject to N-acetylserine. K5 is modified (N6-acetyllysine). S27 bears the Phosphoserine mark. Residues 31–38 (FRAAVPSG) are epitope recognized by CAR and healthy patient antibodies. Mg(2+) is bound at residue S40. A Phosphotyrosine modification is found at Y44. The tract at residues 56–63 (RYMGKGVS) is epitope recognized by CAR antibodies. The residue at position 60 (K60) is an N6-acetyllysine; alternate. K60 is subject to N6-succinyllysine; alternate. Residues K64 and K71 each carry the N6-acetyllysine modification. An N6-acetyllysine; alternate modification is found at K89. At K89 the chain carries N6-succinyllysine; alternate. 2 positions are modified to N6-acetyllysine: K92 and K126. A required for repression of c-myc promoter activity region spans residues 97–237 (MDGTENKSKF…KTAIGKAGYT (141 aa)). Substrate-binding residues include H158 and E167. An N6-acetyllysine mark is found at K193 and K199. K202 carries the N6-acetyllysine; alternate modification. K202 participates in a covalent cross-link: Glycyl lysine isopeptide (Lys-Gly) (interchain with G-Cter in SUMO2); alternate. The active-site Proton donor is the E210. Residues K228 and K233 each carry the N6-acetyllysine; alternate modification. K228 carries the N6-succinyllysine; alternate modification. At K228 the chain carries N6-(2-hydroxyisobutyryl)lysine; alternate. Position 233 is an N6-malonyllysine; alternate (K233). Residue D245 participates in Mg(2+) binding. S254 carries the post-translational modification Phosphoserine. K256 carries the post-translational modification N6-acetyllysine. Residues S263 and S272 each carry the phosphoserine modification. Position 281 is an N6-acetyllysine; alternate (K281). N6-(2-hydroxyisobutyryl)lysine; alternate is present on K281. Position 285 is an N6-acetyllysine (K285). Y287 carries the post-translational modification Phosphotyrosine. S291 is modified (phosphoserine). Mg(2+)-binding residues include E293 and D318. Residues E293 and D318 each coordinate substrate. Residues K335 and K343 each carry the N6-acetyllysine modification. The Proton acceptor role is filled by K343. Residues 370 to 373 (SHRS) and K394 contribute to the substrate site. The required for interaction with PLG stretch occupies residues 405–434 (AKYNQLLRIEEELGSKAKFAGRNFRNPLAK). K406 bears the N6-acetyllysine mark. An N6-acetyllysine; alternate modification is found at K420. The residue at position 420 (K420) is an N6-succinyllysine; alternate. K420 carries the N6-malonyllysine; alternate modification.

This sequence belongs to the enolase family. In terms of assembly, mammalian enolase is composed of 3 isozyme subunits, alpha, beta and gamma, which can form homodimers or heterodimers which are cell-type and development-specific. ENO1 interacts with PLG in the neuronal plasma membrane and promotes its activation. The C-terminal lysine is required for this binding. Isoform MBP-1 interacts with TRAPPC2B. Interacts with ENO4 and PGAM2. Interacts with CMTM6. Mg(2+) is required as a cofactor. Post-translationally, ISGylated. In terms of processing, lysine 2-hydroxyisobutyrylation (Khib) by p300/EP300 activates the phosphopyruvate hydratase activity. The alpha/alpha homodimer is expressed in embryo and in most adult tissues. The alpha/beta heterodimer and the beta/beta homodimer are found in striated muscle, and the alpha/gamma heterodimer and the gamma/gamma homodimer in neurons.

Its subcellular location is the cytoplasm. It localises to the cell membrane. The protein resides in the myofibril. It is found in the sarcomere. The protein localises to the m line. Its subcellular location is the nucleus. The catalysed reaction is (2R)-2-phosphoglycerate = phosphoenolpyruvate + H2O. It participates in carbohydrate degradation; glycolysis; pyruvate from D-glyceraldehyde 3-phosphate: step 4/5. Glycolytic enzyme the catalyzes the conversion of 2-phosphoglycerate to phosphoenolpyruvate. In addition to glycolysis, involved in various processes such as growth control, hypoxia tolerance and allergic responses. May also function in the intravascular and pericellular fibrinolytic system due to its ability to serve as a receptor and activator of plasminogen on the cell surface of several cell-types such as leukocytes and neurons. Stimulates immunoglobulin production. Its function is as follows. Binds to the myc promoter and acts as a transcriptional repressor. May be a tumor suppressor. This chain is Alpha-enolase (ENO1), found in Homo sapiens (Human).